Consider the following 199-residue polypeptide: Imidazoleglycerol-phosphate dehydratase (199 aa).

Belongs to the imidazoleglycerol-phosphate dehydratase family.

The protein resides in the cytoplasm. The catalysed reaction is D-erythro-1-(imidazol-4-yl)glycerol 3-phosphate = 3-(imidazol-4-yl)-2-oxopropyl phosphate + H2O. Its pathway is amino-acid biosynthesis; L-histidine biosynthesis; L-histidine from 5-phospho-alpha-D-ribose 1-diphosphate: step 6/9. This chain is Imidazoleglycerol-phosphate dehydratase, found in Desulfotalea psychrophila (strain LSv54 / DSM 12343).